The following is a 140-amino-acid chain: Protein archease (140 aa).

Ca(2+) is bound by residues Asp11, Asp139, and Leu140.

This sequence belongs to the archease family.

Its function is as follows. Activates the tRNA-splicing ligase complex by facilitating the enzymatic turnover of catalytic subunit RtcB. Acts by promoting the guanylylation of RtcB, a key intermediate step in tRNA ligation. Can also alter the NTP specificity of RtcB such that ATP, dGTP or ITP is used efficiently. The protein is Protein archease of Methanopyrus kandleri (strain AV19 / DSM 6324 / JCM 9639 / NBRC 100938).